A 1001-amino-acid chain; its full sequence is O-GlcNAcase NagJ (1001 aa).

An N-terminal signal peptide occupies residues 1 to 30 (MKRKMLKRLLTSAFACMFIANGLITTTVRA). The interval 179–469 (VSARGIVEGF…WNRAIDMLYG (291 aa)) is catalytic domain. A GH84 domain is found at 180-452 (SARGIVEGFY…TAADYSWNMD (273 aa)). A protein-binding residues include Gly-187, Lys-218, and Asp-297. Asp-298 (proton donor) is an active-site residue. Residues Tyr-335, 394 to 396 (WWN), Asp-401, and Asn-429 contribute to the a protein site. Coiled coils occupy residues 515-543 (KEDASALIEELYGEFARMEEACNNLKANL) and 573-597 (VAQLNEDTEAYESAKEIAQNKLNTA). The Fibronectin type-III domain maps to 916-1001 (PVRDFKASEI…KESLTLRTAR (86 aa)).

The protein belongs to the glycosyl hydrolase 84 family.

It carries out the reaction 3-O-(N-acetyl-beta-D-glucosaminyl)-L-seryl-[protein] + H2O = N-acetyl-D-glucosamine + L-seryl-[protein]. The enzyme catalyses 3-O-(N-acetyl-beta-D-glucosaminyl)-L-threonyl-[protein] + H2O = L-threonyl-[protein] + N-acetyl-D-glucosamine. Its activity is regulated as follows. Inhibited by O-(2-acetamido-2-deoxy-D-glucopyranosylidene)amino-N-phenyl-carbamate (PUGNAc) and streptozotocin. Its function is as follows. Binds carbohydrates. Capable of hydrolyzing the glycosidic link of O-GlcNAcylated proteins. Can bind and deglycosylate O-glycosylated peptides from mammals. The polypeptide is O-GlcNAcase NagJ (nagJ) (Clostridium perfringens (strain ATCC 13124 / DSM 756 / JCM 1290 / NCIMB 6125 / NCTC 8237 / Type A)).